The primary structure comprises 519 residues: Membrane-bound transcription factor site-2 protease (519 aa).

The Cytoplasmic segment spans residues 1-3 (MIP). The chain crosses the membrane as a helical span at residues 4–24 (VSLVVVVVGGWTVVYLTDLVL). Residues 25 to 74 (KSSVYFKHSYEDWLENNGLSISPFHIRWQTAVFNRAFYSWGRRKARMLYQ) lie on the Lumenal side of the membrane. The next 2 membrane-spanning stretches (helical) occupy residues 75-95 (WFNFGMVFGVIAMFSSFFLLG) and 96-107 (KTLMQTLAQMMA). Topologically, residues 108–144 (DSPSSYSSSSSSSSSSSSSSSSSSSSSSSLHNEQVLQ) are lumenal. Residues 115–135 (SSSSSSSSSSSSSSSSSSSSS) form a disordered region. Residues 145–169 (VVVPGINLPVNQLTYFFTAVLISGV) form a helical membrane-spanning segment. Histidine 171 provides a ligand contact to Zn(2+). Glutamate 172 is an active-site residue. Transmembrane regions (helical) follow at residues 174–186 (GHGIAAIREQVRF), 187–209 (NGFGIFLFIIYPGAFVDLFTTHL), and 229–251 (FVLALLGILALVLLPVILLPFYY). Residue histidine 175 participates in Zn(2+) binding. The Lumenal portion of the chain corresponds to 252 to 446 (TGVGVLITEV…LPVVVETFVK (195 aa)). Asparagine 337 carries N-linked (GlcNAc...) asparagine glycosylation. 2 helical membrane passes run 447 to 464 (YLISLSGALAIVNAVPCF) and 465 to 476 (ALDGQWILNSFL). Residues 477 to 492 (DATLTSVIGDNDVKDL) lie on the Lumenal side of the membrane. A helical membrane pass occupies residues 493-513 (IGFFILLGGSVLLAANVTLGL). At 514-519 (WMVTAR) the chain is on the cytoplasmic side.

The protein belongs to the peptidase M50A family. Requires Zn(2+) as cofactor. As to expression, expressed in heart, brain, placenta, lung, liver, muscle, kidney and pancreas.

It localises to the membrane. The protein resides in the cytoplasm. Its subcellular location is the golgi apparatus membrane. The catalysed reaction is Cleaves several transcription factors that are type-2 transmembrane proteins within membrane-spanning domains. Known substrates include sterol regulatory element-binding protein (SREBP) -1, SREBP-2 and forms of the transcriptional activator ATF6. SREBP-2 is cleaved at the site 477-DRSRILL-|-CVLTFLCLSFNPLTSLLQWGGA-505. The residues Asn-Pro, 11 residues distal to the site of cleavage in the membrane-spanning domain, are important for cleavage by S2P endopeptidase. Replacement of either of these residues does not prevent cleavage, but there is no cleavage if both of these residues are replaced.. Its function is as follows. Zinc metalloprotease that mediates intramembrane proteolysis of proteins such as ATF6, ATF6B, SREBF1/SREBP1 and SREBF2/SREBP2. Catalyzes the second step in the proteolytic activation of the sterol regulatory element-binding proteins (SREBPs) SREBF1/SREBP1 and SREBF2/SREBP2: cleaves SREBPs within the first transmembrane segment, thereby releasing the N-terminal segment with a portion of the transmembrane segment attached. Mature N-terminal SREBP fragments shuttle to the nucleus and activate gene transcription. Also mediates the second step in the proteolytic activation of the cyclic AMP-dependent transcription factor ATF-6 (ATF6 and ATF6B). Involved in intramembrane proteolysis during bone formation. In astrocytes and osteoblasts, upon DNA damage and ER stress, mediates the second step of the regulated intramembrane proteolytic activation of the transcription factor CREB3L1, leading to the inhibition of cell-cycle progression. The chain is Membrane-bound transcription factor site-2 protease from Homo sapiens (Human).